Reading from the N-terminus, the 313-residue chain is Protoheme IX farnesyltransferase (313 aa).

The next 8 membrane-spanning stretches (helical) occupy residues 34–54, 56–76, 105–125, 128–148, 152–172, 173–193, 243–263, and 291–311; these read VIELLLVTTIPAMLLADRGTV, PLLILNTLVGGLLAAAGANTL, HALIFGLALSVLSFFWLWWTT, LSAHLAGATIAFYVLIYTLVL, TSQNVVWGGAAGCMPVMIGWS, AVTGTIQWPALVMFLIIFFWT, LALATGWLYAAVAIVAGTWFL, and YLAVVFCALAVDSALALPTLF.

The protein belongs to the UbiA prenyltransferase family. Protoheme IX farnesyltransferase subfamily.

The protein localises to the cell membrane. The catalysed reaction is heme b + (2E,6E)-farnesyl diphosphate + H2O = Fe(II)-heme o + diphosphate. It functions in the pathway porphyrin-containing compound metabolism; heme O biosynthesis; heme O from protoheme: step 1/1. Converts heme B (protoheme IX) to heme O by substitution of the vinyl group on carbon 2 of heme B porphyrin ring with a hydroxyethyl farnesyl side group. The protein is Protoheme IX farnesyltransferase of Mycolicibacterium vanbaalenii (strain DSM 7251 / JCM 13017 / BCRC 16820 / KCTC 9966 / NRRL B-24157 / PYR-1) (Mycobacterium vanbaalenii).